Consider the following 316-residue polypeptide: Cobalamin biosynthesis protein CobD (316 aa).

5 consecutive transmembrane segments (helical) span residues 45-65, 78-100, 151-171, 209-229, and 291-311; these read FSPY…ALGV, PVLY…SLAF, DGVI…AMTY, LTWL…KGAL, and ISLL…FYLV.

This sequence belongs to the CobD/CbiB family.

The protein resides in the cell membrane. It participates in cofactor biosynthesis; adenosylcobalamin biosynthesis. Its function is as follows. Converts cobyric acid to cobinamide by the addition of aminopropanol on the F carboxylic group. The chain is Cobalamin biosynthesis protein CobD from Streptococcus sanguinis (strain SK36).